The following is a 224-amino-acid chain: Octanoyltransferase (224 aa).

In terms of domain architecture, BPL/LPL catalytic spans 29–224 (PGTPDELWLC…GDRLESYLSP (196 aa)). Residues 68 to 75 (RGGQVTYH), 157 to 159 (ALG), and 170 to 172 (GLA) each bind substrate. Cys-188 acts as the Acyl-thioester intermediate in catalysis.

It belongs to the LipB family.

It localises to the cytoplasm. It catalyses the reaction octanoyl-[ACP] + L-lysyl-[protein] = N(6)-octanoyl-L-lysyl-[protein] + holo-[ACP] + H(+). Its pathway is protein modification; protein lipoylation via endogenous pathway; protein N(6)-(lipoyl)lysine from octanoyl-[acyl-carrier-protein]: step 1/2. Its function is as follows. Catalyzes the transfer of endogenously produced octanoic acid from octanoyl-acyl-carrier-protein onto the lipoyl domains of lipoate-dependent enzymes. Lipoyl-ACP can also act as a substrate although octanoyl-ACP is likely to be the physiological substrate. The protein is Octanoyltransferase of Methylibium petroleiphilum (strain ATCC BAA-1232 / LMG 22953 / PM1).